The sequence spans 83 residues: Cell division topological specificity factor (83 aa).

The protein belongs to the MinE family.

In terms of biological role, prevents the cell division inhibition by proteins MinC and MinD at internal division sites while permitting inhibition at polar sites. This ensures cell division at the proper site by restricting the formation of a division septum at the midpoint of the long axis of the cell. This chain is Cell division topological specificity factor, found in Buchnera aphidicola subsp. Baizongia pistaciae (strain Bp).